The following is a 200-amino-acid chain: NADH-quinone oxidoreductase subunit C (200 aa).

Belongs to the complex I 30 kDa subunit family. In terms of assembly, NDH-1 is composed of 14 different subunits. Subunits NuoB, C, D, E, F, and G constitute the peripheral sector of the complex.

It is found in the cell inner membrane. The enzyme catalyses a quinone + NADH + 5 H(+)(in) = a quinol + NAD(+) + 4 H(+)(out). Its function is as follows. NDH-1 shuttles electrons from NADH, via FMN and iron-sulfur (Fe-S) centers, to quinones in the respiratory chain. The immediate electron acceptor for the enzyme in this species is believed to be ubiquinone. Couples the redox reaction to proton translocation (for every two electrons transferred, four hydrogen ions are translocated across the cytoplasmic membrane), and thus conserves the redox energy in a proton gradient. This is NADH-quinone oxidoreductase subunit C from Burkholderia vietnamiensis (strain G4 / LMG 22486) (Burkholderia cepacia (strain R1808)).